The following is a 267-amino-acid chain: Palmitoyltransferase ZDHHC12 (267 aa).

Over 1–9 the chain is Cytoplasmic; sequence MALWPPLNS. Residues 10–30 traverse the membrane as a helical segment; that stretch reads GMLVRTGHTVLTWGITLVLFL. At 31–43 the chain is on the lumenal side; that stretch reads HDTELRQWEEQGE. Residues 44-64 form a helical membrane-spanning segment; sequence LLLPLTFLLLVLSSLLLYLAV. The Cytoplasmic portion of the chain corresponds to 65–140; that stretch reads SLMDPGYVTT…ENCVGERNHP (76 aa). Residues 97 to 147 form the DHHC domain; that stretch reads RRCRHCLVLQPLRARHCRDCRRCVRRYDHHCPWMENCVGERNHPLFVAYLA. Cys-127 functions as the S-palmitoyl cysteine intermediate in the catalytic mechanism. Residues 141–161 traverse the membrane as a helical segment; the sequence is LFVAYLALQLVVLLWGLCLAW. The Lumenal segment spans residues 162–178; it reads SGLQFFQPWGLWLRSTG. Residues 179–199 traverse the membrane as a helical segment; the sequence is LLFTTFLLLSFFALVVALLLA. At 200-267 the chain is on the cytoplasmic side; it reads SHLYLVARNT…EEEEGSSQVV (68 aa).

It belongs to the DHHC palmitoyltransferase family.

The protein resides in the golgi apparatus membrane. It is found in the endoplasmic reticulum membrane. The enzyme catalyses L-cysteinyl-[protein] + hexadecanoyl-CoA = S-hexadecanoyl-L-cysteinyl-[protein] + CoA. Palmitoyltransferase that catalyzes the addition of palmitate onto various protein substrates. Has a palmitoyltransferase activity toward gephyrin/GPHN, regulating its clustering at synapses and its function in gamma-aminobutyric acid receptor clustering. Thereby, indirectly regulates GABAergic synaptic transmission. Negatively regulates NLRP3-driven inflammation. Catalyzes NLRP3 palmitoylation, leading to its degradation via the chaperone-mediated autophagy (CMA) process. The polypeptide is Palmitoyltransferase ZDHHC12 (Mus musculus (Mouse)).